A 596-amino-acid polypeptide reads, in one-letter code: MKNIRNFSIIAHIDHGKSTLADRLIQECGAVSDREMSSQIMDTMDIEKERGITIKAQSVRLNYALNGQNFVLNLIDTPGHVDFSYEVSRSLASCEGALLVVDASQGVEAQTIANVYIALENNLEIIPVINKIDLPAADPARVKDEIEHIIGLDCSGAIEVSAKTGVGIKELLEAIITRIPAPNGDVSKPTKALIYDSWFDNYLGALALVRVYDGEISKNDEILVMGTGKKHIVLDLMYPNPIAPIKTKTLSAGEVGIVVLGLKNVSDVQVGDTITQSRNPLKEPVGGFERAKPFVFAGLYPIETDKFEDLRDALDKLKLNDSSISYEPETSVALGFGFRVGFLGLLHMEVVKERLEREFDLDLIATAPTVTYEVIQTDGLNLKIQNPSQLPPVNKIDSILEPYVKATIITPSEFLGNIITLLNNRRGIQTKMDYITTDRVLLEYDIPMNEIVMDFYDKLKSSTKGYASFDYEPSDYRVGDLVKLDVKVAGETVDALSIIVPESKAQTKGRDFVKAMKEIVPRQLFEVAIQASIGNKIIARETVKSMGKNVTAKCYGGDITRKRKLLEKQKEGKKRMKAIGKVNLPQEAFLSVLKID.

Positions 2–183 (KNIRNFSIIA…AIITRIPAPN (182 aa)) constitute a tr-type G domain. GTP is bound by residues 14 to 19 (DHGKST) and 130 to 133 (NKID).

The protein belongs to the TRAFAC class translation factor GTPase superfamily. Classic translation factor GTPase family. LepA subfamily.

Its subcellular location is the cell inner membrane. It catalyses the reaction GTP + H2O = GDP + phosphate + H(+). In terms of biological role, required for accurate and efficient protein synthesis under certain stress conditions. May act as a fidelity factor of the translation reaction, by catalyzing a one-codon backward translocation of tRNAs on improperly translocated ribosomes. Back-translocation proceeds from a post-translocation (POST) complex to a pre-translocation (PRE) complex, thus giving elongation factor G a second chance to translocate the tRNAs correctly. Binds to ribosomes in a GTP-dependent manner. This is Elongation factor 4 from Campylobacter concisus (strain 13826).